The chain runs to 503 residues: GMP synthase [glutamine-hydrolyzing] (503 aa).

Residues 1–189 (MVLVLDFGSQ…FLELAGAKRD (189 aa)) form the Glutamine amidotransferase type-1 domain. Cysteine 78 acts as the Nucleophile in catalysis. Active-site residues include histidine 164 and glutamate 166. The 189-residue stretch at 190-378 (WTPEHVLEEL…LGLPDTLRLR (189 aa)) folds into the GMPS ATP-PPase domain. Residue 217–223 (SGGVDSS) coordinates ATP.

As to quaternary structure, homodimer.

The catalysed reaction is XMP + L-glutamine + ATP + H2O = GMP + L-glutamate + AMP + diphosphate + 2 H(+). Its pathway is purine metabolism; GMP biosynthesis; GMP from XMP (L-Gln route): step 1/1. Its function is as follows. Catalyzes the synthesis of GMP from XMP. The sequence is that of GMP synthase [glutamine-hydrolyzing] from Thermus thermophilus (strain ATCC BAA-163 / DSM 7039 / HB27).